Consider the following 404-residue polypeptide: Phosphopentomutase (404 aa).

Residues aspartate 10, aspartate 303, histidine 308, aspartate 344, histidine 345, and histidine 356 each coordinate Mn(2+).

This sequence belongs to the phosphopentomutase family. Mn(2+) is required as a cofactor.

It localises to the cytoplasm. The catalysed reaction is 2-deoxy-alpha-D-ribose 1-phosphate = 2-deoxy-D-ribose 5-phosphate. It carries out the reaction alpha-D-ribose 1-phosphate = D-ribose 5-phosphate. The protein operates within carbohydrate degradation; 2-deoxy-D-ribose 1-phosphate degradation; D-glyceraldehyde 3-phosphate and acetaldehyde from 2-deoxy-alpha-D-ribose 1-phosphate: step 1/2. Functionally, isomerase that catalyzes the conversion of deoxy-ribose 1-phosphate (dRib-1-P) and ribose 1-phosphate (Rib-1-P) to deoxy-ribose 5-phosphate (dRib-5-P) and ribose 5-phosphate (Rib-5-P), respectively. This chain is Phosphopentomutase, found in Shewanella oneidensis (strain ATCC 700550 / JCM 31522 / CIP 106686 / LMG 19005 / NCIMB 14063 / MR-1).